A 250-amino-acid polypeptide reads, in one-letter code: Cobalt transport protein CbiM (250 aa).

Residues 1–25 form the signal peptide; the sequence is MKQNIKLGVIAALMLIVLTPVTSNA. Transmembrane regions (helical) follow at residues 33–53, 68–88, 100–120, 132–152, 163–183, and 205–225; these read LPVK…LVGL, VLLA…IPSV, LGAI…VLIF, TLGA…FLIF, AMPV…VTSI, and GIFF…TVIV.

This sequence belongs to the CbiM family. Forms an energy-coupling factor (ECF) transporter complex composed of an ATP-binding protein (A component, CbiO), a transmembrane protein (T component, CbiQ) and 2 possible substrate-capture proteins (S components, CbiM and CbiN) of unknown stoichimetry.

It is found in the cell membrane. It functions in the pathway cofactor biosynthesis; adenosylcobalamin biosynthesis. Its function is as follows. Part of the energy-coupling factor (ECF) transporter complex CbiMNOQ involved in cobalt import. The protein is Cobalt transport protein CbiM of Clostridioides difficile (strain R20291) (Peptoclostridium difficile).